Consider the following 463-residue polypeptide: Argininosuccinate lyase (463 aa).

The protein belongs to the lyase 1 family. Argininosuccinate lyase subfamily.

It is found in the cytoplasm. It catalyses the reaction 2-(N(omega)-L-arginino)succinate = fumarate + L-arginine. Its pathway is amino-acid biosynthesis; L-arginine biosynthesis; L-arginine from L-ornithine and carbamoyl phosphate: step 3/3. The polypeptide is Argininosuccinate lyase (Thiobacillus denitrificans (strain ATCC 25259 / T1)).